Consider the following 78-residue polypeptide: uncharacterized protein (78 aa).

2 consecutive transmembrane segments (helical) span residues 12–32 (LVSVMGMGMVFAFLLLLICVV) and 51–71 (GVGAAVPAGGALAAAIAVAVH).

The protein localises to the cell membrane. This is an uncharacterized protein from Treponema pallidum (strain Nichols).